The primary structure comprises 22 residues: NADH dehydrogenase [ubiquinone] 1 alpha subcomplex subunit 9 (22 aa).

A disordered region spans residues 1–22 (ASNLATGGAGPLIXKGTGGRSS).

Belongs to the complex I NDUFA9 subunit family. As to quaternary structure, complex I is composed of about 45 different subunits. The cofactor is FAD.

The protein localises to the mitochondrion matrix. In terms of biological role, accessory subunit of the mitochondrial membrane respiratory chain NADH dehydrogenase (Complex I), that is believed not to be involved in catalysis. Complex I functions in the transfer of electrons from NADH to the respiratory chain. The immediate electron acceptor for the enzyme is believed to be ubiquinone. The chain is NADH dehydrogenase [ubiquinone] 1 alpha subcomplex subunit 9 from Solanum tuberosum (Potato).